The primary structure comprises 377 residues: Erythronate-4-phosphate dehydrogenase (377 aa).

2 residues coordinate substrate: Ser59 and Thr81. Residue Asp162 coordinates NAD(+). Residue Arg237 is part of the active site. Residue Asp260 coordinates NAD(+). Residue Glu265 is part of the active site. The active-site Proton donor is His282. Gly285 provides a ligand contact to NAD(+). Tyr286 lines the substrate pocket.

The protein belongs to the D-isomer specific 2-hydroxyacid dehydrogenase family. PdxB subfamily. In terms of assembly, homodimer.

The protein localises to the cytoplasm. It carries out the reaction 4-phospho-D-erythronate + NAD(+) = (R)-3-hydroxy-2-oxo-4-phosphooxybutanoate + NADH + H(+). The protein operates within cofactor biosynthesis; pyridoxine 5'-phosphate biosynthesis; pyridoxine 5'-phosphate from D-erythrose 4-phosphate: step 2/5. In terms of biological role, catalyzes the oxidation of erythronate-4-phosphate to 3-hydroxy-2-oxo-4-phosphonooxybutanoate. The polypeptide is Erythronate-4-phosphate dehydrogenase (Psychrobacter arcticus (strain DSM 17307 / VKM B-2377 / 273-4)).